A 364-amino-acid polypeptide reads, in one-letter code: Rhomboid domain-containing protein 2 (364 aa).

Helical transmembrane passes span 11–31 (WCLC…SLLV), 63–83 (LVTY…AIII), 100–120 (CFFT…FEAV), 158–178 (FGMV…SWLI), and 184–204 (LSNV…CYSI). Disordered stretches follow at residues 242-282 (AQSR…KLAS) and 317-364 (SSVY…VPMP). 2 stretches are compositionally biased toward polar residues: residues 267–276 (HPVSQTQHAS) and 317–329 (SSVY…TSLG).

The protein belongs to the peptidase S54 family.

The protein localises to the golgi apparatus. Its subcellular location is the cis-Golgi network membrane. This is Rhomboid domain-containing protein 2 (RHBDD2) from Homo sapiens (Human).